Consider the following 166-residue polypeptide: Tegument protein UL55 homolog (166 aa).

Belongs to the alphaherpesvirinae HHV-1 UL55 family.

It localises to the virion tegument. Its subcellular location is the host nucleus matrix. This chain is Tegument protein UL55 homolog (MDV070), found in Gallid herpesvirus 2 (strain Chicken/Md5/ATCC VR-987) (GaHV-2).